The sequence spans 314 residues: Vomeronasal type-1 receptor 98 (314 aa).

Topologically, residues 1-19 (MNKDTTMYCSAYIRDVFFC) are extracellular. Residues 20-40 (EIGVGISANSCLLLFHIFMFI) traverse the membrane as a helical segment. The Cytoplasmic segment spans residues 41-49 (RGHRPRLTD). A helical membrane pass occupies residues 50–70 (LPIGLMALIHLLMLLLAAYIA). The Extracellular portion of the chain corresponds to 71–92 (KDFFMSSGWDDITCKLFIFLHR). C84 and C171 are oxidised to a cystine. A helical membrane pass occupies residues 93–113 (FFRSLSVCATCMLSVFQTIIL). Residues 114 to 133 (CPQSSHLAKFKPNSPYHLSC) are Cytoplasmic-facing. A helical membrane pass occupies residues 134 to 154 (FFIFMSIFYTSISSHILIAAI). The Extracellular portion of the chain corresponds to 155 to 186 (ATQNLTSVNLIYITKSCSFLPMSSSMQRTFST). Residue N158 is glycosylated (N-linked (GlcNAc...) asparagine). Residues 187-207 (LLAFRNAFLIGLMGLSTCYMA) form a helical membrane-spanning segment. At 208-235 (TLLCRHKTRSQRLQNSKLSPKATPEQRA) the chain is on the cytoplasmic side. Residues 236–256 (IWTLLMFMSFFLVMSTFDSII) form a helical membrane-spanning segment. Over 257 to 268 (SYSRTIFQGNPS) the chain is Extracellular. Residues 269–289 (LYCAQILVAHSYAVVSPMLVL) traverse the membrane as a helical segment. Over 290 to 314 (SNENRLTNPLISMYERIVRLDFLCW) the chain is Cytoplasmic.

This sequence belongs to the G-protein coupled receptor 1 family.

It localises to the cell membrane. In terms of biological role, putative pheromone receptor implicated in the regulation of social as well as reproductive behavior. This chain is Vomeronasal type-1 receptor 98 (Vom1r98), found in Rattus norvegicus (Rat).